An 890-amino-acid polypeptide reads, in one-letter code: Calcium-transporting ATPase (890 aa).

The Cytoplasmic segment spans residues 1 to 47 (MKFHEMGQTDLLEATNTSMKQGLTEKEVKKRLDKHGPNELQEGKKTS). A helical membrane pass occupies residues 48 to 68 (ALLLFFAQFKDFMVLVLLAAT). The Extracellular segment spans residues 69–78 (LISGFLGEYV). A helical membrane pass occupies residues 79-99 (DAVAIIAIVFVNGILGFFQER). The Cytoplasmic portion of the chain corresponds to 100 to 238 (RAEQSLQALK…TLSTPLQRRL (139 aa)). The chain crosses the membrane as a helical span at residues 239-258 (EQLGKILIVVALLLTVLVVA). Residues 259–270 (VGVIQGHDLYSM) are Extracellular-facing. A helical transmembrane segment spans residues 271–288 (FLAGVSLAVAAIPEGLPA). Ca(2+)-binding residues include Val-279, Ala-280, Ile-282, and Glu-284. The Cytoplasmic portion of the chain corresponds to 289-688 (IVTVALSLGV…KEGRNIYENI (400 aa)). The active-site 4-aspartylphosphate intermediate is Asp-326. Mg(2+) is bound by residues Asp-633 and Asp-637. Residues 689-708 (RKFIRYLLASNVGEILVMLF) form a helical membrane-spanning segment. Ca(2+) contacts are provided by Asn-699 and Glu-702. The Extracellular segment spans residues 709–718 (AMLLALPLPL). A helical transmembrane segment spans residues 719–739 (VPIQILWVNLVTDGLPAMALG). Asn-727, Thr-730, and Asp-731 together coordinate Ca(2+). At 740–759 (MDQPEGDVMKRKPRHPKEGV) the chain is on the cytoplasmic side. Residues 760 to 782 (FARKLGWKVVSRGFLIGVATILA) form a helical membrane-spanning segment. Over 783-798 (FIIVYHRNPENLAYAQ) the chain is Extracellular. The helical transmembrane segment at 799 to 818 (TIAFATLVLAQLIHVFDCRS) threads the bilayer. The Cytoplasmic portion of the chain corresponds to 819–830 (ETSVFSRNPFQN). The chain crosses the membrane as a helical span at residues 831–849 (LYLIGAVLSSILLMLVVIY). Residues 850–864 (YPPLQPIFHTVAITP) are Extracellular-facing. A helical membrane pass occupies residues 865–885 (GDWMLVIGMSAIPTFLLAGSL). At 886-890 (LTRKK) the chain is on the cytoplasmic side.

This sequence belongs to the cation transport ATPase (P-type) (TC 3.A.3) family. Type IIA subfamily. In terms of processing, phosphorylated in a Ca(2+)-dependent manner starting 4 hours after shifting to sporulation medium.

The protein resides in the cell membrane. It catalyses the reaction Ca(2+)(in) + ATP + H2O = Ca(2+)(out) + ADP + phosphate + H(+). This magnesium-dependent enzyme catalyzes the hydrolysis of ATP coupled with the transport of calcium. The chain is Calcium-transporting ATPase (yloB) from Bacillus subtilis (strain 168).